A 1413-amino-acid polypeptide reads, in one-letter code: DNA-directed RNA polymerase subunit beta' (1413 aa).

Zn(2+)-binding residues include C70, C72, C85, and C88. The Mg(2+) site is built by D461, D463, and D465. Positions 820, 894, 901, and 904 each coordinate Zn(2+).

It belongs to the RNA polymerase beta' chain family. As to quaternary structure, the RNAP catalytic core consists of 2 alpha, 1 beta, 1 beta' and 1 omega subunit. When a sigma factor is associated with the core the holoenzyme is formed, which can initiate transcription. Mg(2+) serves as cofactor. It depends on Zn(2+) as a cofactor.

The catalysed reaction is RNA(n) + a ribonucleoside 5'-triphosphate = RNA(n+1) + diphosphate. DNA-dependent RNA polymerase catalyzes the transcription of DNA into RNA using the four ribonucleoside triphosphates as substrates. In Cupriavidus metallidurans (strain ATCC 43123 / DSM 2839 / NBRC 102507 / CH34) (Ralstonia metallidurans), this protein is DNA-directed RNA polymerase subunit beta'.